A 663-amino-acid chain; its full sequence is Oxytetracycline resistance protein (663 aa).

In terms of domain architecture, tr-type G spans 1–252 (MNKLNLGILA…GIRELLPSVH (252 aa)). GTP contacts are provided by residues 10–17 (AHVDAGKT), 74–78 (DTPGH), and 128–131 (NKID).

Belongs to the TRAFAC class translation factor GTPase superfamily. Classic translation factor GTPase family. TetM/TetO subfamily.

Abolishes the inhibitory effect of oxytetracycline on protein synthesis by a non-covalent modification of the ribosomes. The sequence is that of Oxytetracycline resistance protein (otrA) from Streptomyces rimosus.